The primary structure comprises 128 residues: Arsenic resistance transcriptional regulator ArsR1 (128 aa).

Residues 11–103 (MREILTPPIV…AMLKGVVDAN (93 aa)) form the HTH arsR-type domain. 2 residues coordinate arsenite: cysteine 43 and cysteine 45. Residues 44 to 67 (VCELTHALELSQPKISRHLAQLRE) constitute a DNA-binding region (H-T-H motif).

As to quaternary structure, homodimer.

It is found in the cytoplasm. Its function is as follows. Binds arsenite and regulates the expression of arsenic efflux pumps. In vitro, also binds antimony and bismuth, but not arsenate. In Pseudomonas putida (strain ATCC 47054 / DSM 6125 / CFBP 8728 / NCIMB 11950 / KT2440), this protein is Arsenic resistance transcriptional regulator ArsR1.